Reading from the N-terminus, the 328-residue chain is 2,3-diketo-L-gulonate-binding periplasmic protein YiaO (328 aa).

An N-terminal signal peptide occupies residues Met-1–Ala-24.

As to quaternary structure, the complex comprises the extracytoplasmic solute receptor protein YiaO, and the two transmembrane proteins YiaM and YiaN.

It is found in the periplasm. In terms of biological role, part of the tripartite ATP-independent periplasmic (TRAP) transport system YiaMNO involved in the uptake of 2,3-diketo-L-gulonate. This protein specifically binds 2,3-diketo-L-gulonate. Is not able to bind either L-ascorbate or dehydroascorbate. In Escherichia coli (strain K12), this protein is 2,3-diketo-L-gulonate-binding periplasmic protein YiaO (yiaO).